Reading from the N-terminus, the 1284-residue chain is Collagen alpha-1(XX) chain (1284 aa).

Positions M1 to G22 are cleaved as a signal peptide. In terms of domain architecture, Fibronectin type-III 1 spans A28–S119. Positions D122–R171 are disordered. The region spanning D179 to L354 is the VWFA domain. Fibronectin type-III domains are found at residues A379–P468, P469–P559, P560–A647, S649–T738, and P743–A833. The N-linked (GlcNAc...) asparagine glycan is linked to N607. In terms of domain architecture, Laminin G-like spans G842 to D1037. Disordered regions lie at residues S1065 to E1190 and S1212 to E1284. Over residues P1071–L1082 the composition is skewed to pro residues. 2 Collagen-like domains span residues P1071–R1127 and P1133–E1190. 2 stretches are compositionally biased toward low complexity: residues L1112 to P1125 and E1166 to P1181. Over residues S1271–E1284 the composition is skewed to polar residues.

As to expression, high expression in heart, lung, liver, skeletal muscle, kidney, pancreas, spleen, testis, ovary, subthalamic nucleus and fetal liver. Weak expression in other tissues tested.

Its subcellular location is the secreted. The protein resides in the extracellular space. In terms of biological role, probable collagen protein. The protein is Collagen alpha-1(XX) chain (COL20A1) of Homo sapiens (Human).